The following is a 1266-amino-acid chain: 5-oxoprolinase 1 (1266 aa).

Belongs to the oxoprolinase family. Expressed in roots, stems, leaves, flowers and siliques.

The protein localises to the cytoplasm. It catalyses the reaction 5-oxo-L-proline + ATP + 2 H2O = L-glutamate + ADP + phosphate + H(+). Functionally, catalyzes the cleavage of 5-oxo-L-proline to form L-glutamate coupled to the hydrolysis of ATP to ADP and inorganic phosphate. Acts in the glutathione degradation pathway. The sequence is that of 5-oxoprolinase 1 from Arabidopsis thaliana (Mouse-ear cress).